We begin with the raw amino-acid sequence, 747 residues long: Protein FAM83C (747 aa).

The tract at residues methionine 1–glycine 309 is DUF1669. 7 disordered regions span residues leucine 322–lysine 352, threonine 374–alanine 412, leucine 462–valine 484, alanine 517–glutamine 550, asparagine 588–serine 633, glycine 646–arginine 672, and alanine 692–arginine 715. The span at alanine 328–serine 350 shows a compositional bias: low complexity. Residues glycine 390–asparagine 402 show a composition bias toward polar residues. Positions glutamate 697–asparagine 707 are enriched in gly residues.

It belongs to the FAM83 family. In terms of assembly, may interact with RAF1. Post-translationally, phosphorylated in vitro by CSNK1A1.

It is found in the cytoplasm. Its function is as follows. May play a role in MAPK signaling. This Homo sapiens (Human) protein is Protein FAM83C.